Here is a 416-residue protein sequence, read N- to C-terminus: Alpha-1-antiproteinase (416 aa).

The N-terminal stretch at 1-24 (MALSITRGLLLLAALCCLAPTSLA) is a signal peptide. N-linked (GlcNAc...) asparagine glycosylation is found at Asn-68, Asn-105, Asn-143, and Asn-269. The interval 371-390 (GATFLEAIPMSLPPDVEFNR) is RCL. Phosphoserine is present on Ser-381.

Belongs to the serpin family. Interacts with CELA2A. Interacts with ERGIC3 and LMAN1/ERGIC53. Interacts with PRSS1/Trypsin. As to expression, plasma.

It localises to the secreted. In terms of biological role, inhibits human leukocyte elastase, pig pancreatic elastase and bovine trypsin on a 1:1 molar basis. In Ovis aries (Sheep), this protein is Alpha-1-antiproteinase.